A 331-amino-acid polypeptide reads, in one-letter code: Dof zinc finger protein DOF1.1 (331 aa).

A Dof-type zinc finger spans residues 77–131 (LKCPRCDSSNTKFCYYNNYNLTQPRHFCKGCRRYWTQGGALRNVPVGGGCRRNNK). Zn(2+)-binding residues include Cys79, Cys82, Cys104, and Cys107. Disordered stretches follow at residues 121-166 (PVGG…TNHQ) and 291-331 (EEQP…NDLL). Residues 135-160 (NGNLKSSSSSSKQSSSVNAQSPSSGQ) are compositionally biased toward low complexity. A compositionally biased stretch (polar residues) spans 305–316 (GLTSPGNQTNQY).

Interacts with OBF4. In terms of tissue distribution, expressed in the vasculature (mainly in the phloem and associated cell files) of cotyledons, leaves, roots, flower stalks and petals. The PEAR proteins (e.g. DOF2.4, DOF5.1, DOF3.2, DOF1.1, DOF5.6 and DOF5.3) form a short-range concentration gradient that peaks at protophloem sieve elements (PSE).

The protein localises to the nucleus. Transcription factor that binds specifically to a 5'-AA[AG]G-3' consensus core sequence. Enhances the DNA binding of OBF transcription factors to OCS elements. Involved in the regulation of root development. The PEAR proteins (e.g. DOF2.4, DOF5.1, DOF3.2, DOF1.1, DOF5.6 and DOF5.3) activate gene expression that promotes radial growth of protophloem sieve elements. Element of a regulatory network controlling indole glucosinolates (IGS) biosynthesis, probably by inducing the expression of accurate genes (e.g. CYP83B1). Promotes apical dominance. The sequence is that of Dof zinc finger protein DOF1.1 from Arabidopsis thaliana (Mouse-ear cress).